The primary structure comprises 417 residues: UDP-N-acetylglucosamine 1-carboxyvinyltransferase 3 (417 aa).

Phosphoenolpyruvate is bound at residue 22–23 (KN). Arg-92 provides a ligand contact to UDP-N-acetyl-alpha-D-glucosamine. Cys-116 (proton donor) is an active-site residue. 2-(S-cysteinyl)pyruvic acid O-phosphothioketal is present on Cys-116. UDP-N-acetyl-alpha-D-glucosamine contacts are provided by residues 121-125 (RPIDQ), Asp-304, and Ile-326.

Belongs to the EPSP synthase family. MurA subfamily.

It is found in the cytoplasm. The enzyme catalyses phosphoenolpyruvate + UDP-N-acetyl-alpha-D-glucosamine = UDP-N-acetyl-3-O-(1-carboxyvinyl)-alpha-D-glucosamine + phosphate. It functions in the pathway cell wall biogenesis; peptidoglycan biosynthesis. Cell wall formation. Adds enolpyruvyl to UDP-N-acetylglucosamine. The sequence is that of UDP-N-acetylglucosamine 1-carboxyvinyltransferase 3 from Caldanaerobacter subterraneus subsp. tengcongensis (strain DSM 15242 / JCM 11007 / NBRC 100824 / MB4) (Thermoanaerobacter tengcongensis).